Here is a 249-residue protein sequence, read N- to C-terminus: Triosephosphate isomerase (249 aa).

Residue 8–10 participates in substrate binding; it reads NWK. Histidine 95 serves as the catalytic Electrophile. The active-site Proton acceptor is glutamate 163. 2 residues coordinate substrate: glycine 169 and serine 209.

Belongs to the triosephosphate isomerase family. Homodimer.

The protein localises to the cytoplasm. The enzyme catalyses D-glyceraldehyde 3-phosphate = dihydroxyacetone phosphate. It functions in the pathway carbohydrate biosynthesis; gluconeogenesis. It participates in carbohydrate degradation; glycolysis; D-glyceraldehyde 3-phosphate from glycerone phosphate: step 1/1. Its function is as follows. Involved in the gluconeogenesis. Catalyzes stereospecifically the conversion of dihydroxyacetone phosphate (DHAP) to D-glyceraldehyde-3-phosphate (G3P). The protein is Triosephosphate isomerase of Orientia tsutsugamushi (strain Boryong) (Rickettsia tsutsugamushi).